The sequence spans 355 residues: uncharacterized protein (355 aa).

This sequence belongs to the carbohydrate kinase PfkB family.

This is an uncharacterized protein from Dictyostelium discoideum (Social amoeba).